A 475-amino-acid chain; its full sequence is Sulfate adenylyltransferase subunit 1 (475 aa).

The tr-type G domain maps to 24 to 240 (KSLLRFLTCG…ESAEVERELE (217 aa)). The tract at residues 33-40 (GSVDDGKS) is G1. 33–40 (GSVDDGKS) contacts GTP. A G2 region spans residues 91 to 95 (GITID). Residues 112–115 (DTPG) are G3. GTP-binding positions include 112-116 (DTPGH) and 167-170 (NKMD). Residues 167–170 (NKMD) are G4. Residues 204 to 206 (SAL) form a G5 region.

It belongs to the TRAFAC class translation factor GTPase superfamily. Classic translation factor GTPase family. CysN/NodQ subfamily. In terms of assembly, heterodimer composed of CysD, the smaller subunit, and CysN.

It catalyses the reaction sulfate + ATP + H(+) = adenosine 5'-phosphosulfate + diphosphate. It participates in sulfur metabolism; hydrogen sulfide biosynthesis; sulfite from sulfate: step 1/3. Its function is as follows. With CysD forms the ATP sulfurylase (ATPS) that catalyzes the adenylation of sulfate producing adenosine 5'-phosphosulfate (APS) and diphosphate, the first enzymatic step in sulfur assimilation pathway. APS synthesis involves the formation of a high-energy phosphoric-sulfuric acid anhydride bond driven by GTP hydrolysis by CysN coupled to ATP hydrolysis by CysD. The chain is Sulfate adenylyltransferase subunit 1 from Aeromonas hydrophila subsp. hydrophila (strain ATCC 7966 / DSM 30187 / BCRC 13018 / CCUG 14551 / JCM 1027 / KCTC 2358 / NCIMB 9240 / NCTC 8049).